Reading from the N-terminus, the 188-residue chain is Putative protein SSX6 (188 aa).

Disordered regions lie at residues 1–22 and 74–188; these read MNGDDAFAKRPRDDAKASEKRS and KRAT…EDDK. Residues 20 to 83 form the KRAB-related domain; that stretch reads KRSKAFDDIA…KRATDSQRND (64 aa). Composition is skewed to basic and acidic residues over residues 75 to 96 and 112 to 122; these read RATDSQRNDSDNDRNRGNEVER and MPEKPAEEGSD. Ser123 carries the post-translational modification Phosphoserine. The span at 147 to 156 shows a compositional bias: basic and acidic residues; sequence SSEKIHERSG. Residues 157-170 are compositionally biased toward basic residues; sequence PKRGKHAWTHRLRE. Residues 179-188 show a composition bias toward acidic residues; it reads EISDPEEDDK.

It belongs to the SSX family. Not detected in any normal tissues. Expressed in a melanoma cell line.

Its function is as follows. Could act as a modulator of transcription. This chain is Putative protein SSX6, found in Homo sapiens (Human).